Reading from the N-terminus, the 394-residue chain is Elongation factor Tu (394 aa).

The tr-type G domain maps to 10–204; the sequence is KPHVNVGTIG…ALDTYIPEPE (195 aa). Residues 19-26 are G1; sequence GHVDHGKT. Residue 19 to 26 participates in GTP binding; the sequence is GHVDHGKT. Thr26 lines the Mg(2+) pocket. The G2 stretch occupies residues 60 to 64; that stretch reads GITIN. A G3 region spans residues 81 to 84; that stretch reads DCPG. GTP is bound by residues 81–85 and 136–139; these read DCPGH and NKCD. Residues 136-139 form a G4 region; the sequence is NKCD. The interval 174–176 is G5; the sequence is SAL.

Belongs to the TRAFAC class translation factor GTPase superfamily. Classic translation factor GTPase family. EF-Tu/EF-1A subfamily. As to quaternary structure, monomer.

The protein localises to the cytoplasm. The catalysed reaction is GTP + H2O = GDP + phosphate + H(+). GTP hydrolase that promotes the GTP-dependent binding of aminoacyl-tRNA to the A-site of ribosomes during protein biosynthesis. The protein is Elongation factor Tu of Shewanella denitrificans (strain OS217 / ATCC BAA-1090 / DSM 15013).